We begin with the raw amino-acid sequence, 514 residues long: 2,3-bisphosphoglycerate-independent phosphoglycerate mutase (514 aa).

Mn(2+)-binding residues include D14 and S64. S64 functions as the Phosphoserine intermediate in the catalytic mechanism. Substrate is bound by residues H125, R155–D156, R187, R193, R263–R266, and K336. Mn(2+) contacts are provided by D403, H407, D444, H445, and H463.

Belongs to the BPG-independent phosphoglycerate mutase family. Monomer. Mn(2+) serves as cofactor.

It catalyses the reaction (2R)-2-phosphoglycerate = (2R)-3-phosphoglycerate. The protein operates within carbohydrate degradation; glycolysis; pyruvate from D-glyceraldehyde 3-phosphate: step 3/5. In terms of biological role, catalyzes the interconversion of 2-phosphoglycerate and 3-phosphoglycerate. This chain is 2,3-bisphosphoglycerate-independent phosphoglycerate mutase, found in Salmonella typhi.